The chain runs to 257 residues: 1-(5-phosphoribosyl)-5-[(5-phosphoribosylamino)methylideneamino] imidazole-4-carboxamide isomerase (257 aa).

Asp-8 functions as the Proton acceptor in the catalytic mechanism. Asp-129 functions as the Proton donor in the catalytic mechanism.

This sequence belongs to the HisA/HisF family.

Its subcellular location is the cytoplasm. The enzyme catalyses 1-(5-phospho-beta-D-ribosyl)-5-[(5-phospho-beta-D-ribosylamino)methylideneamino]imidazole-4-carboxamide = 5-[(5-phospho-1-deoxy-D-ribulos-1-ylimino)methylamino]-1-(5-phospho-beta-D-ribosyl)imidazole-4-carboxamide. The protein operates within amino-acid biosynthesis; L-histidine biosynthesis; L-histidine from 5-phospho-alpha-D-ribose 1-diphosphate: step 4/9. The protein is 1-(5-phosphoribosyl)-5-[(5-phosphoribosylamino)methylideneamino] imidazole-4-carboxamide isomerase of Rippkaea orientalis (strain PCC 8801 / RF-1) (Cyanothece sp. (strain PCC 8801)).